A 315-amino-acid chain; its full sequence is 2-oxoglutarate and iron-dependent oxygenase domain-containing protein 3 (315 aa).

A disordered region spans residues 1-32 (MAPQRRGPPRVPEGNSAAERRHANSTKKDRLP). Over 1–41 (MAPQRRGPPRVPEGNSAAERRHANSTKKDRLPQEAQRTWLR) the chain is Cytoplasmic. The segment covering 18-32 (AERRHANSTKKDRLP) has biased composition (basic and acidic residues). A helical; Signal-anchor for type II membrane protein transmembrane segment spans residues 42-62 (IVALGVSLALVTFLLWSSAGI). Topologically, residues 63-315 (DDDVAEVVAH…DHGIEDPVLT (253 aa)) are lumenal. The 103-residue stretch at 203–305 (KPTFFSRINS…AITIAFTCNP (103 aa)) folds into the Fe2OG dioxygenase domain. N211 carries N-linked (GlcNAc...) asparagine glycosylation. Residues H226 and D228 each coordinate Fe cation. Residue N263 is glycosylated (N-linked (GlcNAc...) asparagine). H284 is a Fe cation binding site. R294 is a catalytic residue. R294 contributes to the 2-oxoglutarate binding site.

It belongs to the OGFOD3 family. It depends on Fe(2+) as a cofactor. L-ascorbate serves as cofactor.

The protein resides in the membrane. The sequence is that of 2-oxoglutarate and iron-dependent oxygenase domain-containing protein 3 (Ogfod3) from Rattus norvegicus (Rat).